A 131-amino-acid polypeptide reads, in one-letter code: Small ribosomal subunit protein uS8 (131 aa).

The protein belongs to the universal ribosomal protein uS8 family. Part of the 30S ribosomal subunit. Contacts proteins S5 and S12.

Its function is as follows. One of the primary rRNA binding proteins, it binds directly to 16S rRNA central domain where it helps coordinate assembly of the platform of the 30S subunit. The protein is Small ribosomal subunit protein uS8 of Sorangium cellulosum (strain So ce56) (Polyangium cellulosum (strain So ce56)).